A 447-amino-acid chain; its full sequence is Argininosuccinate synthase (447 aa).

ATP is bound by residues 17–25 (AFSGGLDTS) and Ala-43. Tyr-99 is a binding site for L-citrulline. ATP is bound by residues Gly-129 and Thr-131. Residues Thr-131, Asn-135, and Asp-136 each coordinate L-aspartate. Asn-135 is a binding site for L-citrulline. Asp-136 contacts ATP. 2 residues coordinate L-citrulline: Arg-139 and Ser-192. Asp-194 provides a ligand contact to ATP. Thr-201, Glu-203, and Glu-280 together coordinate L-citrulline.

Belongs to the argininosuccinate synthase family. Type 2 subfamily. Homotetramer.

The protein resides in the cytoplasm. The enzyme catalyses L-citrulline + L-aspartate + ATP = 2-(N(omega)-L-arginino)succinate + AMP + diphosphate + H(+). It participates in amino-acid biosynthesis; L-arginine biosynthesis; L-arginine from L-ornithine and carbamoyl phosphate: step 2/3. The chain is Argininosuccinate synthase from Escherichia fergusonii (strain ATCC 35469 / DSM 13698 / CCUG 18766 / IAM 14443 / JCM 21226 / LMG 7866 / NBRC 102419 / NCTC 12128 / CDC 0568-73).